Consider the following 792-residue polypeptide: Leucine--tRNA ligase (792 aa).

A 'HIGH' region motif is present at residues 39-50 (PYPSAAGLHLGH). The 'KMSKS' region signature appears at 569–573 (KMSKS). Lys-572 is a binding site for ATP.

Belongs to the class-I aminoacyl-tRNA synthetase family.

It is found in the cytoplasm. The enzyme catalyses tRNA(Leu) + L-leucine + ATP = L-leucyl-tRNA(Leu) + AMP + diphosphate. The polypeptide is Leucine--tRNA ligase (Mycoplasma genitalium (strain ATCC 33530 / DSM 19775 / NCTC 10195 / G37) (Mycoplasmoides genitalium)).